The following is a 573-amino-acid chain: Phosphoenolpyruvate-protein phosphotransferase (573 aa).

H190 serves as the catalytic Tele-phosphohistidine intermediate. The phosphoenolpyruvate site is built by R297 and R332. The Mg(2+) site is built by E431 and D455. Residues 454–455 and R465 each bind phosphoenolpyruvate; that span reads ND. The Proton donor role is filled by C502.

Belongs to the PEP-utilizing enzyme family. In terms of assembly, homodimer. Requires Mg(2+) as cofactor.

The protein localises to the cytoplasm. It carries out the reaction L-histidyl-[protein] + phosphoenolpyruvate = N(pros)-phospho-L-histidyl-[protein] + pyruvate. With respect to regulation, irreversibly inhibited the sulfhydryl reagent N-ethylmaleimide (NEM). General (non sugar-specific) component of the phosphoenolpyruvate-dependent sugar phosphotransferase system (sugar PTS). This major carbohydrate active-transport system catalyzes the phosphorylation of incoming sugar substrates concomitantly with their translocation across the cell membrane. Enzyme I transfers the phosphoryl group from phosphoenolpyruvate (PEP) to the phosphoryl carrier protein (HPr). The polypeptide is Phosphoenolpyruvate-protein phosphotransferase (ptsI) (Mycoplasma capricolum subsp. capricolum (strain California kid / ATCC 27343 / NCTC 10154)).